Reading from the N-terminus, the 228-residue chain is Lipoprotein-releasing system ATP-binding protein LolD (228 aa).

One can recognise an ABC transporter domain in the interval 6–228 (LRCKELSKSY…KNGILHKEQG (223 aa)). 42-49 (GASGSGKS) serves as a coordination point for ATP.

This sequence belongs to the ABC transporter superfamily. Lipoprotein translocase (TC 3.A.1.125) family. As to quaternary structure, the complex is composed of two ATP-binding proteins (LolD) and two transmembrane proteins (LolC and LolE).

The protein resides in the cell inner membrane. Its function is as follows. Part of the ABC transporter complex LolCDE involved in the translocation of mature outer membrane-directed lipoproteins, from the inner membrane to the periplasmic chaperone, LolA. Responsible for the formation of the LolA-lipoprotein complex in an ATP-dependent manner. The chain is Lipoprotein-releasing system ATP-binding protein LolD from Idiomarina loihiensis (strain ATCC BAA-735 / DSM 15497 / L2-TR).